A 185-amino-acid polypeptide reads, in one-letter code: Elongation factor P (185 aa).

Belongs to the elongation factor P family.

The protein localises to the cytoplasm. The protein operates within protein biosynthesis; polypeptide chain elongation. Involved in peptide bond synthesis. Stimulates efficient translation and peptide-bond synthesis on native or reconstituted 70S ribosomes in vitro. Probably functions indirectly by altering the affinity of the ribosome for aminoacyl-tRNA, thus increasing their reactivity as acceptors for peptidyl transferase. This chain is Elongation factor P, found in Finegoldia magna (strain ATCC 29328 / DSM 20472 / WAL 2508) (Peptostreptococcus magnus).